The sequence spans 578 residues: A-type ATP synthase subunit A (578 aa).

228–235 (GPFGSGKT) is an ATP binding site.

Belongs to the ATPase alpha/beta chains family. As to quaternary structure, has multiple subunits with at least A(3), B(3), C, D, E, F, H, I and proteolipid K(x).

It is found in the cell membrane. The enzyme catalyses ATP + H2O + 4 H(+)(in) = ADP + phosphate + 5 H(+)(out). Its function is as follows. Component of the A-type ATP synthase that produces ATP from ADP in the presence of a proton gradient across the membrane. The A chain is the catalytic subunit. The protein is A-type ATP synthase subunit A of Methanosarcina barkeri (strain Fusaro / DSM 804).